We begin with the raw amino-acid sequence, 270 residues long: Glutamate racemase (270 aa).

Substrate contacts are provided by residues 14–15 and 46–47; these read DS and YG. Cys77 serves as the catalytic Proton donor/acceptor. 78-79 provides a ligand contact to substrate; sequence NT. Cys189 serves as the catalytic Proton donor/acceptor. Residue 190-191 participates in substrate binding; it reads TH.

It belongs to the aspartate/glutamate racemases family.

The catalysed reaction is L-glutamate = D-glutamate. The protein operates within cell wall biogenesis; peptidoglycan biosynthesis. Provides the (R)-glutamate required for cell wall biosynthesis. The sequence is that of Glutamate racemase from Neisseria meningitidis serogroup C.